A 165-amino-acid polypeptide reads, in one-letter code: Neurotrophin-3 (165 aa).

An N-terminal signal peptide occupies residues 1–3 (IQS). Residues 4–119 (TSMDQGSLTE…VLNRTSRRKR (116 aa)) constitute a propeptide that is removed on maturation. The N-linked (GlcNAc...) asparagine glycan is linked to Asn112.

It belongs to the NGF-beta family.

It localises to the secreted. In terms of biological role, seems to promote the survival of visceral and proprioceptive sensory neurons. This Calabaria reinhardtii (Calabar boa) protein is Neurotrophin-3 (NTF3).